The primary structure comprises 406 residues: Tryptophan synthase beta chain (406 aa).

The residue at position 99 (lysine 99) is an N6-(pyridoxal phosphate)lysine.

The protein belongs to the TrpB family. Tetramer of two alpha and two beta chains. The cofactor is pyridoxal 5'-phosphate.

The enzyme catalyses (1S,2R)-1-C-(indol-3-yl)glycerol 3-phosphate + L-serine = D-glyceraldehyde 3-phosphate + L-tryptophan + H2O. The protein operates within amino-acid biosynthesis; L-tryptophan biosynthesis; L-tryptophan from chorismate: step 5/5. In terms of biological role, the beta subunit is responsible for the synthesis of L-tryptophan from indole and L-serine. The polypeptide is Tryptophan synthase beta chain (Brucella melitensis biotype 2 (strain ATCC 23457)).